Consider the following 296-residue polypeptide: Elongation factor Ts (296 aa).

An involved in Mg(2+) ion dislocation from EF-Tu region spans residues threonine 82–valine 85.

This sequence belongs to the EF-Ts family.

It is found in the cytoplasm. In terms of biological role, associates with the EF-Tu.GDP complex and induces the exchange of GDP to GTP. It remains bound to the aminoacyl-tRNA.EF-Tu.GTP complex up to the GTP hydrolysis stage on the ribosome. The chain is Elongation factor Ts from Coxiella burnetii (strain CbuK_Q154) (Coxiella burnetii (strain Q154)).